A 249-amino-acid polypeptide reads, in one-letter code: Basigin (249 aa).

The Ig-like C2-type domain occupies 1 to 82 (AAGTIQTSVN…VGRSNIVVEG (82 aa)). Residues 1 to 187 (AAGTIQTSVN…MTLRVRSRLA (187 aa)) are Extracellular-facing. Disulfide bonds link Cys20/Cys66 and Cys105/Cys165. N-linked (GlcNAc...) asparagine glycans are attached at residues Asn23, Asn132, and Asn166. The Ig-like V-type domain occupies 84-179 (PRIKVGKKSE…TQGSVQEIMT (96 aa)). Residues 188–208 (ALWPFLGIVAEVLVLVTIIFI) form a helical membrane-spanning segment. At 209–249 (YEKRRKPDQTLDEDDPGAAPLKGSGHHMNDKDKNVRQRNAT) the chain is on the cytoplasmic side. Residues 216 to 249 (DQTLDEDDPGAAPLKGSGHHMNDKDKNVRQRNAT) are disordered. At Thr218 the chain carries Phosphothreonine. A Phosphoserine modification is found at Ser232.

In terms of assembly, homooligomer. Interacts with VEGFA, KDR/VEGFR2, PPIA/CYPA, SLC16A12, SLC16A11, ATP1B2, MAG, L1CAM and AJAP1. Interacts with SLC16A3; interaction mediates SLC16A3 targeting to the plasma membrane. Interacts with SLC16A1; interaction mediates SLC16A1 targeting to the plasma membrane. Interacts with PPIL2; regulates BSG transport to the cell membrane. Interacts with XKR8; promoting its localization at the cell membrane. Interacts with SLC16A6; this interaction mediates targeting to the plasma membrane.

It is found in the cell membrane. The protein resides in the endoplasmic reticulum membrane. The protein localises to the basolateral cell membrane. In terms of biological role, signaling receptor for cyclophilins, essential for PPIA/CYPA and PPIB/CYPB-dependent signaling related to chemotaxis and adhesion of immune cells. Plays an important role in targeting the monocarboxylate transporters SLC16A1/GLUT1, SLC16A3, SLC16A8, SLC16A11 and SLC16A12 to the plasma membrane. Acts as a coreceptor for vascular endothelial growth factor receptor 2 (KDR/VEGFR2) in endothelial cells enhancing its VEGFA-mediated activation and downstream signaling. Promotes angiogenesis through EPAS1/HIF2A-mediated up-regulation of VEGFA and KDR/VEGFR2 in endothelial cells. In Cricetulus griseus (Chinese hamster), this protein is Basigin (BSG).